The following is a 151-amino-acid chain: Arginine repressor (151 aa).

It belongs to the ArgR family.

The protein resides in the cytoplasm. It functions in the pathway amino-acid biosynthesis; L-arginine biosynthesis [regulation]. Its function is as follows. Regulates arginine biosynthesis genes. The protein is Arginine repressor of Lachnospira eligens (strain ATCC 27750 / DSM 3376 / VPI C15-48 / C15-B4) (Eubacterium eligens).